Reading from the N-terminus, the 29-residue chain is Cytochrome b6-f complex subunit 8 (29 aa).

Residues 3 to 23 form a helical membrane-spanning segment; sequence IVNIAWAALMVVSTFSLTLVV.

The protein belongs to the PetN family. In terms of assembly, the 4 large subunits of the cytochrome b6-f complex are cytochrome b6, subunit IV (17 kDa polypeptide, PetD), cytochrome f and the Rieske protein, while the 4 small subunits are PetG, PetL, PetM and PetN. The complex functions as a dimer.

The protein resides in the plastid. It is found in the chloroplast thylakoid membrane. Its function is as follows. Component of the cytochrome b6-f complex, which mediates electron transfer between photosystem II (PSII) and photosystem I (PSI), cyclic electron flow around PSI, and state transitions. The chain is Cytochrome b6-f complex subunit 8 from Huperzia lucidula (Shining clubmoss).